Consider the following 591-residue polypeptide: Paxillin (591 aa).

Met-1 is modified (N-acetylmethionine). The LD motif 1 signature appears at 3–15; the sequence is DLDALLADLESTT. The segment at 17 to 139 is disordered; sequence HISKRPVFLS…SPTVMSSSLG (123 aa). Position 31 is a phosphotyrosine; by PTK6 (Tyr-31). The segment covering 45–54 has biased composition (pro residues); that stretch reads VPPPVPPPPS. Ser-83 is subject to Phosphoserine. Tyr-88 is modified (phosphotyrosine). The span at 89–99 shows a compositional bias: low complexity; the sequence is SSSAKNSSASN. Residue Ser-106 is modified to Phosphoserine. Position 118 is a phosphotyrosine; by PTK6 (Tyr-118). Phosphoserine occurs at positions 119, 126, and 130. Polar residues predominate over residues 121–137; that stretch reads PNKQKSAEPSPTVMSSS. A Phosphothreonine modification is found at Thr-132. Phosphoserine is present on residues Ser-137, Ser-140, and Ser-143. The LD motif 2 motif lies at 144–156; the sequence is ELDRLLLELNAVQ. The segment at 156 to 261 is disordered; sequence QHSPPGFPAD…QQQTRISASS (106 aa). Residue Tyr-181 is modified to Phosphotyrosine. The LD motif 3 motif lies at 216-228; the sequence is SVESLLDELESSV. Ser-230 is subject to Phosphoserine. Positions 236–261 are enriched in polar residues; it reads TVNQGEMSSPQRVTSSQQQTRISASS. Phosphoserine; by CDK5 is present on Ser-244. Phosphoserine is present on residues Ser-250, Ser-258, Ser-261, Ser-272, Ser-303, Ser-322, Ser-332, and Ser-340. Residues 262–315 form a required for binding to PARVA and ILK region; that stretch reads ATRELDELMASLSDFKMQGLEQRVDGERPWAAGWPPSSRQSSPEGQDEGGFMAQ. The LD motif 4 signature appears at 265 to 276; the sequence is ELDELMASLSDF. The segment at 289-338 is disordered; that stretch reads RPWAAGWPPSSRQSSPEGQDEGGFMAQGKTGSSSPPGGLSKPGSQLDSML. Over residues 315-334 the composition is skewed to low complexity; that stretch reads QGKTGSSSPPGGLSKPGSQL. The LD motif 5 motif lies at 333–345; it reads QLDSMLGSLQSDL. LIM zinc-binding domains follow at residues 356–415, 416–473, 474–533, and 534–591; these read GVCG…LFSP, RCYY…DMFA, PKCG…RRGS, and LCSG…KLFC. The residue at position 533 (Ser-533) is a Phosphoserine.

This sequence belongs to the paxillin family. In terms of assembly, interacts in vitro with VCL/vinculin as well as to the SH3 domain of SRC and, when tyrosine phosphorylated, to the SH2 domain of CRK. Interacts with GIT1. Interacts with NUDT16L1/SDOS. Interacts with PTK2/FAK1. Interacts with PTK2B/PYK2. Interacts with ASAP2. Interacts with unphosphorylated ITGA4. Interacts with RNF5. Interacts with PDCD10. Interacts with NEK3, the interaction is prolactin-dependent. Interacts with PTK6. Interacts with TGFB1I1. Interacts with SORBS1. Interacts with PARVB. Interacts (via LD motif 4) with PARVA/PARVIN. Interacts (via LD motif 4) with ILK. Interacts (via cytoplasmic domain) with CEACAM1; the interaction is phosphotyrosyl-dependent. Interacts with LIMA1; this complex stabilizes actin dynamics. Interacts with CD36 (via C-terminus). Interacts with TRIM15. Interacts with PAK4; PAK4 acts as a scaffold to suppport PAXI phosphorylation at Ser-272. In terms of processing, phosphorylated by MAPK1/ERK2. Phosphorylated on tyrosine residues during integrin-mediated cell adhesion, embryonic development, fibroblast transformation and following stimulation of cells by mitogens. Phosphorylation at Ser-244 by CDK5 reduces its interaction with PTK2/FAK1 in matrix-cell focal adhesions (MCFA) during oligodendrocytes (OLs) differentiation. Phosphorylation at Tyr-31 and Tyr-118 by PTK6 promote the activation of RAC1 via CRK/CrKII, thereby promoting migration and invasion. Phosphorylation at Ser-250 by SLK is required for PXN redistribution and cell motility. Phosphorylation at Ser-272 promotes focal adhesion disassembly during cell migration.

The protein localises to the cytoplasm. The protein resides in the cytoskeleton. Its subcellular location is the cell junction. It is found in the focal adhesion. It localises to the cell cortex. Cytoskeletal protein involved in actin-membrane attachment at sites of cell adhesion to the extracellular matrix (focal adhesion). Recruits other proteins such as TRIM15 to focal adhesion. The sequence is that of Paxillin from Mus musculus (Mouse).